We begin with the raw amino-acid sequence, 290 residues long: RIO-type serine/threonine-protein kinase Rio1 (290 aa).

The 215-residue stretch at 76–290 (TEYIGIVNSG…PIDEAMIKQL (215 aa)) folds into the Protein kinase domain. Residues 82–90 (VNSGKEAVV) and Lys-103 contribute to the ATP site. The active-site Proton acceptor is the Asp-214. Residues Asn-219 and Asp-231 each contribute to the Mg(2+) site. The 4-aspartylphosphate intermediate role is filled by Asp-231.

This sequence belongs to the protein kinase superfamily. RIO-type Ser/Thr kinase family.

It carries out the reaction L-seryl-[protein] + ATP = O-phospho-L-seryl-[protein] + ADP + H(+). The enzyme catalyses L-threonyl-[protein] + ATP = O-phospho-L-threonyl-[protein] + ADP + H(+). It catalyses the reaction ATP + H2O = ADP + phosphate + H(+). In terms of biological role, despite the protein kinase domain is proposed to act predominantly as an ATPase. The polypeptide is RIO-type serine/threonine-protein kinase Rio1 (rio1) (Methanocaldococcus jannaschii (strain ATCC 43067 / DSM 2661 / JAL-1 / JCM 10045 / NBRC 100440) (Methanococcus jannaschii)).